Consider the following 244-residue polypeptide: Phosphoadenosine 5'-phosphosulfate reductase (244 aa).

Cys-239 functions as the Nucleophile; cysteine thiosulfonate intermediate in the catalytic mechanism.

Belongs to the PAPS reductase family. CysH subfamily.

It localises to the cytoplasm. The enzyme catalyses [thioredoxin]-disulfide + sulfite + adenosine 3',5'-bisphosphate + 2 H(+) = [thioredoxin]-dithiol + 3'-phosphoadenylyl sulfate. The protein operates within sulfur metabolism; hydrogen sulfide biosynthesis; sulfite from sulfate: step 3/3. Its function is as follows. Catalyzes the formation of sulfite from phosphoadenosine 5'-phosphosulfate (PAPS) using thioredoxin as an electron donor. This is Phosphoadenosine 5'-phosphosulfate reductase from Klebsiella pneumoniae subsp. pneumoniae (strain ATCC 700721 / MGH 78578).